The chain runs to 242 residues: GLIPR1-like protein 1 (242 aa).

An N-terminal signal peptide occupies residues 1 to 22 (MALKNKFSCLWILGLCLVATTS). The region spanning 39–171 (EAHNEWRGKV…ASTAIFVCNY (133 aa)) is the SCP domain. The N-linked (GlcNAc...) asparagine glycan is linked to N119. Residue G221 is the site of GPI-anchor amidated glycine attachment. Residues 222 to 242 (RAPQQTAFNPFSLGFLLLRIF) constitute a propeptide, removed in mature form.

The protein belongs to the CRISP family. Part of a oolemmal binding multimeric complex (IZUMO1 complex) composed at least of IZUMO1 and GLIPR1L1; the complex assemblage is influenced by the maturation status of the male germ cell. Interacts with IZUMO1. Post-translationally, N-glycosylated. N-glycosylation decreases during the transit in the caput. Highly expressed in testis.

The protein localises to the cytoplasmic vesicle. Its subcellular location is the secretory vesicle. It is found in the acrosome. The protein resides in the cell membrane. It localises to the membrane raft. The protein localises to the secreted. Required for optimal fertilization at the stage of sperm-oocyte fusion, plays a role in optimizing acrosome function, the translocation of IZUMO1 during the acrosome reaction and the fertilization process. Component of epididymosomes, one type of membranous microvesicules which mediate the transfer of lipids and proteins to spermatozoa plasma membrane during epididymal maturation. Also component of the CD9-positive microvesicules found in the cauda region. This chain is GLIPR1-like protein 1 (GLIPR1L1), found in Homo sapiens (Human).